A 495-amino-acid polypeptide reads, in one-letter code: Ferruginol synthase (495 aa).

Methionine 1 is a topological domain (lumenal). A helical membrane pass occupies residues 2 to 22; that stretch reads DSFPLLAALFFIAATITFLSF. The Cytoplasmic portion of the chain corresponds to 23 to 495; the sequence is RRRRNLPPGP…PLRIIPIVKS (473 aa). Cysteine 437 is a heme binding site.

Belongs to the cytochrome P450 family. It depends on heme as a cofactor. In terms of tissue distribution, expression is more abundant in the rhizome.

Its subcellular location is the endoplasmic reticulum membrane. It catalyses the reaction abieta-8,11,13-triene + reduced [NADPH--hemoprotein reductase] + O2 = ferruginol + oxidized [NADPH--hemoprotein reductase] + H2O + H(+). Cytochrome P450 enzyme (CYP) which catalyzes a unique two-electron oxidation cascade on abieta-8,11,13-triene to produce ferruginol, an intermediate in tanshinone biosynthesis. The polypeptide is Ferruginol synthase (Salvia miltiorrhiza (Chinese sage)).